A 459-amino-acid polypeptide reads, in one-letter code: uncharacterized protein (459 aa).

The tract at residues 28–47 (AHDEELTGPPQKPAYAAKPA) is disordered. One can recognise an FAD-binding PCMH-type domain in the interval 35 to 214 (GPPQKPAYAA…TEVIVKLHPR (180 aa)).

This sequence belongs to the oxygen-dependent FAD-linked oxidoreductase family. FAD is required as a cofactor.

This is an uncharacterized protein from Mycobacterium tuberculosis (strain CDC 1551 / Oshkosh).